Here is a 110-residue protein sequence, read N- to C-terminus: Large ribosomal subunit protein uL22 (110 aa).

The protein belongs to the universal ribosomal protein uL22 family. As to quaternary structure, part of the 50S ribosomal subunit.

In terms of biological role, this protein binds specifically to 23S rRNA; its binding is stimulated by other ribosomal proteins, e.g. L4, L17, and L20. It is important during the early stages of 50S assembly. It makes multiple contacts with different domains of the 23S rRNA in the assembled 50S subunit and ribosome. Its function is as follows. The globular domain of the protein is located near the polypeptide exit tunnel on the outside of the subunit, while an extended beta-hairpin is found that lines the wall of the exit tunnel in the center of the 70S ribosome. This chain is Large ribosomal subunit protein uL22, found in Mycoplasma mobile (strain ATCC 43663 / 163K / NCTC 11711) (Mesomycoplasma mobile).